The sequence spans 65 residues: Oxiana weak toxin (65 aa).

Intrachain disulfides connect C3-C24, C6-C11, C17-C42, C46-C57, and C58-C63.

It belongs to the three-finger toxin family. Ancestral subfamily. Orphan group II sub-subfamily. As to expression, expressed by the venom gland.

It is found in the secreted. Its function is as follows. Binds to muscle and neuronal nicotinic acetylcholine receptors (nAChR). It binds to extracellular domain of rat alpha-7/CHRNA7 nAChR (IC(50)=2.2 uM) and to Torpedo californica membranes (IC(50)=30 uM). This is Oxiana weak toxin from Naja oxiana (Central Asian cobra).